Consider the following 352-residue polypeptide: Schlafen-like protein 4 (352 aa).

Residues 87–235 (FEYQSNFSEV…SDKVYQISSG (149 aa)) are SLFN-like fold. The chain crosses the membrane as a helical span at residues 326–343 (IQNIGWIFFGTALSCCIY).

This sequence belongs to the Schlafen family. As to quaternary structure, component of the PUCH (precursor of 21U RNA 5'-end cleavage holoenzyme) complex; consisting of tofu-1, tofu-2 and either slfl-3 or slfl-4.

Its subcellular location is the membrane. Its function is as follows. Component of the trimeric PUCH (precursor of 21U RNA 5'-end cleavage holoenzyme) complex, that acts as an endoribonuclease processing the 5'-end of precursor Piwi-interacting RNAs (piRNAs). The PUCH complex consists of tofu-1, tofu-2 and either slfl-3 or slfl-4, where tofu-2 exhibits endoribonuclease activity. PUCH-mediated processing strictly requires a 7-methyl-G cap (m7 G-cap) and an uracil at position three (U3). PUCH also exhibits a strict bias for piRNA precursors with an A or G at position 1. Mature piRNA production is enhanced by the interaction of PUCH with the PETISCO complex, which is stabilizing piRNA precursors and allows their processing by PUCH. The chain is Schlafen-like protein 4 from Caenorhabditis elegans.